We begin with the raw amino-acid sequence, 251 residues long: Flap endonuclease Xni (251 aa).

D104 contributes to the Mg(2+) binding site. The 5'-3' exonuclease domain maps to 160 to 250; that stretch reads VLPRQLPDYW…SGNLQQLRLK (91 aa). The K(+) site is built by L171, A172, P180, V182, and V185. Residues 184 to 189 are interaction with DNA; sequence GVGAKT.

This sequence belongs to the Xni family. Requires Mg(2+) as cofactor. It depends on K(+) as a cofactor.

Has flap endonuclease activity. During DNA replication, flap endonucleases cleave the 5'-overhanging flap structure that is generated by displacement synthesis when DNA polymerase encounters the 5'-end of a downstream Okazaki fragment. This Yersinia pseudotuberculosis serotype I (strain IP32953) protein is Flap endonuclease Xni.